Reading from the N-terminus, the 339-residue chain is Dihydroorotate dehydrogenase (quinone) (339 aa).

Residues 62 to 66 (AGLDK) and Thr86 contribute to the FMN site. A substrate-binding site is contributed by Lys66. 111-115 (NRMGF) contacts substrate. Asn139 and Asn172 together coordinate FMN. A substrate-binding site is contributed by Asn172. Catalysis depends on Ser175, which acts as the Nucleophile. Asn177 serves as a coordination point for substrate. FMN-binding residues include Lys217 and Thr245. Substrate is bound at residue 246 to 247 (NT). FMN is bound by residues Gly268, Gly297, and 318-319 (YS).

This sequence belongs to the dihydroorotate dehydrogenase family. Type 2 subfamily. As to quaternary structure, monomer. FMN is required as a cofactor.

The protein resides in the cell membrane. It catalyses the reaction (S)-dihydroorotate + a quinone = orotate + a quinol. It participates in pyrimidine metabolism; UMP biosynthesis via de novo pathway; orotate from (S)-dihydroorotate (quinone route): step 1/1. Functionally, catalyzes the conversion of dihydroorotate to orotate with quinone as electron acceptor. In Shewanella frigidimarina (strain NCIMB 400), this protein is Dihydroorotate dehydrogenase (quinone).